The primary structure comprises 292 residues: MSNNQAFMELGWRNDVGSLAVKDQGMMSERARSDEDRLINGLKWGYGYFDHDQTDNYLQIVPEIHKEVENAKEDLLVVVPDEHSETDDHHHIKDFSERSDHRFYLRNKHENPKKRRIQVLSSDDESEEFTREVPSVTRKGSKRRRRDEKMSNKMRKLQQLVPNCHKTDKVSVLDKTIEYMKNLQLQLQMMSTVGVNPYFLPATLGFGMHNHMLTAMASAHGLNPANHMMPSPLIPALNWPLPPFTNISFPHSSSQSLFLTTSSPASSPQSLHGLVPYFPSFLDFSSHAMRRL.

Positions 114–153 (KRRIQVLSSDDESEEFTREVPSVTRKGSKRRRRDEKMSNK) are disordered. The segment at 134–147 (PSVTRKGSKRRRRD) is basic motif; degenerate. The bHLH domain occupies 134–183 (PSVTRKGSKRRRRDEKMSNKMRKLQQLVPNCHKTDKVSVLDKTIEYMKNL). Basic residues predominate over residues 139 to 153 (KGSKRRRRDEKMSNK). The short motif at 141 to 148 (SKRRRRDE) is the Nuclear localization signal element. Residues 148–183 (EKMSNKMRKLQQLVPNCHKTDKVSVLDKTIEYMKNL) form a helix-loop-helix motif region.

Binds to FHY1 and FHL. Forms PHYA/FHY1/HFR1 complex. Homodimer and heterodimer with PIF3. Do not interact alone with either phytochrome A (phyA) or B (phyB), but REP1/PIF3 complex binds to phyA and phyB, preferentially to the Pfr forms. Forms non-functional heterodimer with PRE6, causing liberation of PIF4 from the transcriptionally inactive complex HFR1-PIF4. Repressed when bound to PRE1, PRE2 and PRE4. Mainly expressed in fruits and flowers and, to a lower extent, in leaves, stems, seedlings and roots.

Its subcellular location is the nucleus. In terms of biological role, atypical bHLH transcription factor that regulates photomorphogenesis through modulation of phytochrome (e.g. PHYA) and cryptochrome signalings. Suppresses the transcriptional regulation activity of PIF4 by forming non-DNA-binding heterodimer. The sequence is that of Transcription factor HFR1 from Arabidopsis thaliana (Mouse-ear cress).